We begin with the raw amino-acid sequence, 142 residues long: Large ribosomal subunit protein uL13 (142 aa).

Belongs to the universal ribosomal protein uL13 family. As to quaternary structure, part of the 50S ribosomal subunit.

Its function is as follows. This protein is one of the early assembly proteins of the 50S ribosomal subunit, although it is not seen to bind rRNA by itself. It is important during the early stages of 50S assembly. This Agathobacter rectalis (strain ATCC 33656 / DSM 3377 / JCM 17463 / KCTC 5835 / VPI 0990) (Eubacterium rectale) protein is Large ribosomal subunit protein uL13.